Consider the following 158-residue polypeptide: NADH-quinone oxidoreductase subunit B (158 aa).

[4Fe-4S] cluster-binding residues include Cys-37, Cys-38, Cys-102, and Cys-132.

This sequence belongs to the complex I 20 kDa subunit family. NDH-1 is composed of 14 different subunits. Subunits NuoB, C, D, E, F, and G constitute the peripheral sector of the complex. The cofactor is [4Fe-4S] cluster.

It is found in the cell inner membrane. The catalysed reaction is a quinone + NADH + 5 H(+)(in) = a quinol + NAD(+) + 4 H(+)(out). In terms of biological role, NDH-1 shuttles electrons from NADH, via FMN and iron-sulfur (Fe-S) centers, to quinones in the respiratory chain. Couples the redox reaction to proton translocation (for every two electrons transferred, four hydrogen ions are translocated across the cytoplasmic membrane), and thus conserves the redox energy in a proton gradient. The polypeptide is NADH-quinone oxidoreductase subunit B (Nitrosomonas europaea (strain ATCC 19718 / CIP 103999 / KCTC 2705 / NBRC 14298)).